Reading from the N-terminus, the 296-residue chain is MGWQNVSFLTDVSHAEPMCDALLEAGALSASIEDADAGTPDEQPQFGEPGSVNTPGWMHSRVVVLLEPDADIEALLAEAGAAIGLSEIPAYSVENVAEQNWVQLTQSQFDPIRVSERLWIVPSWHETPDPAAVNLILDPGMAFGTGSHPTTRLCLEWLERNVSEACTVLDYGCGSGILAIAAARLGAGHVAGVDIDPQAVEAARANAERNGVTALFADSATPVAGEYDVVVANILSNPLRVLAPAICAHVRPGGKLALSGILREQIDEIIAIYAQWIPLQVADVREDWVCLAGIKP.

Residues Thr-151, Gly-172, Asp-194, and Asn-233 each coordinate S-adenosyl-L-methionine.

This sequence belongs to the methyltransferase superfamily. PrmA family.

The protein resides in the cytoplasm. The enzyme catalyses L-lysyl-[protein] + 3 S-adenosyl-L-methionine = N(6),N(6),N(6)-trimethyl-L-lysyl-[protein] + 3 S-adenosyl-L-homocysteine + 3 H(+). Functionally, methylates ribosomal protein L11. The chain is Ribosomal protein L11 methyltransferase from Dechloromonas aromatica (strain RCB).